A 74-amino-acid polypeptide reads, in one-letter code: RNA-binding protein Hfq (74 aa).

Positions aspartate 9–valine 69 constitute a Sm domain.

This sequence belongs to the Hfq family. Homohexamer.

In terms of biological role, RNA chaperone that binds small regulatory RNA (sRNAs) and mRNAs to facilitate mRNA translational regulation in response to envelope stress, environmental stress and changes in metabolite concentrations. Also binds with high specificity to tRNAs. The chain is RNA-binding protein Hfq from Bacillus cereus (strain Q1).